The primary structure comprises 205 residues: Imidazole glycerol phosphate synthase subunit HisH (205 aa).

The Glutamine amidotransferase type-1 domain occupies 3–205 (KIGLIDYGMG…LLRRWLSNIQ (203 aa)). The active-site Nucleophile is cysteine 81. Catalysis depends on residues histidine 185 and glutamate 187.

In terms of assembly, heterodimer of HisH and HisF.

The protein localises to the cytoplasm. It carries out the reaction 5-[(5-phospho-1-deoxy-D-ribulos-1-ylimino)methylamino]-1-(5-phospho-beta-D-ribosyl)imidazole-4-carboxamide + L-glutamine = D-erythro-1-(imidazol-4-yl)glycerol 3-phosphate + 5-amino-1-(5-phospho-beta-D-ribosyl)imidazole-4-carboxamide + L-glutamate + H(+). It catalyses the reaction L-glutamine + H2O = L-glutamate + NH4(+). Its pathway is amino-acid biosynthesis; L-histidine biosynthesis; L-histidine from 5-phospho-alpha-D-ribose 1-diphosphate: step 5/9. IGPS catalyzes the conversion of PRFAR and glutamine to IGP, AICAR and glutamate. The HisH subunit catalyzes the hydrolysis of glutamine to glutamate and ammonia as part of the synthesis of IGP and AICAR. The resulting ammonia molecule is channeled to the active site of HisF. The chain is Imidazole glycerol phosphate synthase subunit HisH from Prochlorococcus marinus (strain MIT 9312).